The following is a 1016-amino-acid chain: EMILIN-1 (1016 aa).

The N-terminal stretch at 1-21 (MAPRTLWSCYLCCLLTAAAGA) is a signal peptide. In terms of domain architecture, EMI spans 56 to 131 (HRNWCAYVVT…QGYGGDDCAE (76 aa)). 3 disulfides stabilise this stretch: Cys60–Cys121, Cys85–Cys92, and Cys120–Cys129. The tract at residues 135–182 (PALGPASSTPRPLARPARPNLSGSSAGSPLSGLGGEGPGESEKVQQLE) is disordered. A compositionally biased stretch (low complexity) spans 139-165 (PASSTPRPLARPARPNLSGSSAGSPLS). An N-linked (GlcNAc...) asparagine glycan is attached at Asn154. Positions 216–256 (TAFNGRQQPADAAARPGVHETLNEIQHQLQLLDTRVSTHDQ) form a coiled coil. 2 disordered regions span residues 257 to 288 (ELGH…GPSE) and 383 to 402 (RGTE…GYTS). Low complexity predominate over residues 266–279 (GGSSSSGGSRAPAP). A coiled-coil region spans residues 356 to 420 (PELGRRLAEL…EDRFNSTLGP (65 aa)). Positions 386 to 397 (ELGGAAGQGGHP) are enriched in gly residues. Residue Asn415 is glycosylated (N-linked (GlcNAc...) asparagine). The interval 416 to 435 (STLGPSEEQEESWPGAPGGL) is disordered. Asn455 and Asn561 each carry an N-linked (GlcNAc...) asparagine glycan. Residues 576-603 (AHGDEGCGACGGVQEELGRLRDGVERCS) adopt a coiled-coil conformation. Asn658 carries an N-linked (GlcNAc...) asparagine glycan. Residues 685 to 752 (IISEINRLQQ…GLQGLREGLS (68 aa)) are a coiled coil. N-linked (GlcNAc...) asparagine glycans are attached at residues Asn766 and Asn794. Disordered stretches follow at residues 811–863 (DLTG…VEGA) and 942–961 (RVDS…VAES). Residues 814-864 (GPAGEAGPPGPPGLQGPPGPAGPPGSPGKDGQEGPIGPPGPQGEQGVEGAP) enclose the Collagen-like domain. Over residues 821-839 (PPGPPGLQGPPGPAGPPGS) the composition is skewed to pro residues. Residues 835–857 (GPPGSPGKDGQEGPIGPPGPQGE) adopt a coiled-coil conformation. Positions 866-1013 (APVPQVAFSA…GALLYGDPEL (148 aa)) constitute a C1q domain.

As to quaternary structure, homotrimer associated through a moderately stable interaction of the C-terminal globular C1q domains, allowing the nucleation of the triple helix and then a further quaternary assembly to higher-order polymers via intermolecular disulfide bonds. Interacts with EMILIN2. Interacts with EFEMP2; this interaction promotes the incorporation of EFEMP2 into the extracellular matrix. In terms of tissue distribution, distributed in tissues where resilience and elastic recoil are prominent. Highest levels in the adult small intestine, aorta, lung, uterus, and appendix and in the fetal spleen, kidney, lung, and heart; intermediate expression was detected in adult liver, ovary, colon, stomach, lymph node and spleen; adult heart, bladder, prostate, adrenal gland, mammary gland, placenta and kidney showed low expression whereas a series of other adult tissues, including skeletal muscle and different regions of adult brain show no expression. Detected in intramuscular nerve bundles, where it particularly localizes in the epineurium, the most external layer of dense connective tissue enclosing the nerve.

The protein resides in the secreted. Its subcellular location is the extracellular space. It localises to the extracellular matrix. Involved in elastic and collagen fibers formation. It is required for EFEMP2 deposition into the extracellular matrix, and collagen network assembly and cross-linking via protein-lysine 6-oxidase/LOX activity. May be responsible for anchoring smooth muscle cells to elastic fibers, and may be involved in the processes that regulate vessel assembly. Has cell adhesive capacity. The polypeptide is EMILIN-1 (EMILIN1) (Homo sapiens (Human)).